The following is a 1400-amino-acid chain: Bromodomain-containing protein 4 (1400 aa).

Residues 1–58 are disordered; sequence MSTESGPGTRLRNLPVMGDGLETSQMSTTQAQAQPQPANAASTNPPPPETSNPNKPKR. Positions 23–43 are enriched in low complexity; sequence TSQMSTTQAQAQPQPANAAST. The 107-residue stretch at 58–164 folds into the Bromo 1 domain; it reads RQTNQLQYLL…KLFLQKINEL (107 aa). Lysine 99 is covalently cross-linked (Glycyl lysine isopeptide (Lys-Gly) (interchain with G-Cter in SUMO2)). Disordered stretches follow at residues 176 to 353 and 461 to 616; these read AKGR…KISE and EPEE…YEEK. The segment covering 197–212 has biased composition (low complexity); sequence PNTTQASTSPQTQTPQ. Residues 244 to 267 show a composition bias toward pro residues; the sequence is PPQPLQTPSPVPPQPPPPPAPVPQ. Residues 321–337 show a composition bias toward basic and acidic residues; it reads PRRESSRPVKPPKKDVP. Positions 349-458 constitute a Bromo 2 domain; sequence SKISEQLKCC…DVFEMRFAKM (110 aa). Serine 471 is modified (phosphoserine). A compositionally biased stretch (low complexity) spans 479-498; sequence KVVAPPSSSDSSSDSSSDSD. Phosphoserine; by CK2 occurs at positions 485, 489, and 493. Positions 485 to 504 are NPS region; sequence SSSDSSSDSSSDSDSSTDDS. The residue at position 495 (serine 495) is a Phosphoserine. 3 positions are modified to phosphoserine; by CK2: serine 499, serine 500, and serine 504. Positions 525–580 are BID region; the sequence is QLAALSQPQQNKPKKKEKDKKEKKKEKHKKKEEVEENKKSKTKELPPKKTKKNNSS. Positions 536–554 are enriched in basic residues; it reads KPKKKEKDKKEKKKEKHKK. Basic and acidic residues predominate over residues 555–571; it reads KEEVEENKKSKTKELPP. Lysine 586 participates in a covalent cross-link: Glycyl lysine isopeptide (Lys-Gly) (interchain with G-Cter in SUMO2). The 83-residue stretch at 601–683 folds into the NET domain; sequence ESEEEDKCKP…SCLRKKRKPQ (83 aa). Serine 602 carries the post-translational modification Phosphoserine. Over residues 606 to 616 the composition is skewed to basic and acidic residues; it reads DKCKPMSYEEK. Glycyl lysine isopeptide (Lys-Gly) (interchain with G-Cter in SUMO2) cross-links involve residues lysine 646 and lysine 695. Positions 675–1125 are disordered; it reads CLRKKRKPQA…GCPPASPAAV (451 aa). Over residues 700-713 the composition is skewed to low complexity; the sequence is SSSESESTSESSSS. Basic residues predominate over residues 725 to 745; sequence KSKKKGHTGRDQKKHHHHHHP. Composition is skewed to pro residues over residues 748-787, 835-848, 883-892, and 900-909; these read QPAPAPVPQQPPPPPQQPPPPPPPQQQQQQPPPPPPPPSM, PELPPHLPQPPEHS, PPKPTRPPAV, and PLLPQPPMAQ. A compositionally biased stretch (low complexity) spans 928 to 938; the sequence is MQMQLYLQQLQ. 3 stretches are compositionally biased toward pro residues: residues 955–966, 975–1000, and 1013–1037; these read QPPPPLPPPPHP, PQPPPPPPPQPQPPPQQQHQPPPRPV, and QPPPPPGQQPTHPPPGQQPPPPQPA. The interval 1050 to 1400 is C-terminal (CTD) region; the sequence is RHHKSDPYSA…LLSIFEENLF (351 aa). Lysine 1053 participates in a covalent cross-link: Glycyl lysine isopeptide (Lys-Gly) (interchain with G-Cter in SUMO2). A compositionally biased stretch (polar residues) spans 1075-1084; the sequence is QMPQFQSLTH. Residues 1085–1095 show a composition bias toward low complexity; it reads QSPPQQNVQPK. Residue lysine 1147 is modified to N6-acetyllysine; alternate. Lysine 1147 participates in a covalent cross-link: Glycyl lysine isopeptide (Lys-Gly) (interchain with G-Cter in SUMO1); alternate. Lysine 1147 is covalently cross-linked (Glycyl lysine isopeptide (Lys-Gly) (interchain with G-Cter in SUMO2); alternate). Residues serine 1153 and serine 1162 each carry the phosphoserine modification. The interval 1155–1377 is disordered; sequence IIRSEPFSTS…KREQERRRRE (223 aa). Residues 1211–1232 are compositionally biased toward basic and acidic residues; sequence PDKDKQKQEPKTPVAPKKDLKI. Residue lysine 1233 forms a Glycyl lysine isopeptide (Lys-Gly) (interchain with G-Cter in SUMO2) linkage. 2 positions are modified to phosphoserine: serine 1237 and serine 1240. Residues 1247–1258 are compositionally biased toward low complexity; that stretch reads TTPSSTAKSSSD. Residues 1259-1320 are compositionally biased toward basic and acidic residues; it reads SFEHFRRAAR…AHEEARRRQE (62 aa). Residues 1321 to 1357 show a composition bias toward low complexity; it reads QQQQQQQQRQEQQQQQQQAAAVAAASAPQAQSSQPQS. Positions 1361 to 1377 are enriched in basic and acidic residues; the sequence is QQRELARKREQERRRRE.

Belongs to the BET family. In terms of assembly, binds acetylated histone H4. Interacts with p53/TP53; the interaction is direct. Interacts (via CTD region) with CDK9 and CCNT1, acting as an associated component of P-TEFb complex. Interacts with RELA (when acetylated at 'Lys-310'). Interacts (via NET domain) with NSD3, CHD4, BICRA and ATAD5. The interaction with BICRA bridges BRD4 to the GBAF complex. Interacts (via NET domain) with JMJD6 (via JmjC and N-terminal domains); the interaction is stronger in presence of ssRNA and recruits JMJD6 on distal enhancers. Interacts with NSD3. Interacts with NIPBL. In terms of processing, phosphorylation by CK2 disrupt the intramolecular binding between the bromo domain 2 and the NPS region and promotes binding between the NPS and the BID regions, leading to activate the protein and promote binding to acetylated histones. In absence of phosphorylation, BRD4 does not localize to p53/TP53 target gene promoters, phosphorylation promoting recruitment to p53/TP53 target promoters.

It localises to the nucleus. It is found in the chromosome. Its function is as follows. Chromatin reader protein that recognizes and binds acetylated histones and plays a key role in transmission of epigenetic memory across cell divisions and transcription regulation. Remains associated with acetylated chromatin throughout the entire cell cycle and provides epigenetic memory for postmitotic G1 gene transcription by preserving acetylated chromatin status and maintaining high-order chromatin structure. During interphase, plays a key role in regulating the transcription of signal-inducible genes by associating with the P-TEFb complex and recruiting it to promoters. Also recruits P-TEFb complex to distal enhancers, so called anti-pause enhancers in collaboration with JMJD6. BRD4 and JMJD6 are required to form the transcriptionally active P-TEFb complex by displacing negative regulators such as HEXIM1 and 7SKsnRNA complex from P-TEFb, thereby transforming it into an active form that can then phosphorylate the C-terminal domain (CTD) of RNA polymerase II. Regulates differentiation of naive CD4(+) T-cells into T-helper Th17 by promoting recruitment of P-TEFb to promoters. Promotes phosphorylation of 'Ser-2' of the C-terminal domain (CTD) of RNA polymerase II. According to a report, directly acts as an atypical protein kinase and mediates phosphorylation of 'Ser-2' of the C-terminal domain (CTD) of RNA polymerase II; these data however need additional evidences in vivo. In addition to acetylated histones, also recognizes and binds acetylated RELA, leading to further recruitment of the P-TEFb complex and subsequent activation of NF-kappa-B. Also acts as a regulator of p53/TP53-mediated transcription: following phosphorylation by CK2, recruited to p53/TP53 specific target promoters. This Mus musculus (Mouse) protein is Bromodomain-containing protein 4 (Brd4).